Here is a 353-residue protein sequence, read N- to C-terminus: H(2)-forming methylenetetrahydromethanopterin dehydrogenase-related protein MJ1338 (353 aa).

Belongs to the HMD family.

The polypeptide is H(2)-forming methylenetetrahydromethanopterin dehydrogenase-related protein MJ1338 (Methanocaldococcus jannaschii (strain ATCC 43067 / DSM 2661 / JAL-1 / JCM 10045 / NBRC 100440) (Methanococcus jannaschii)).